The primary structure comprises 398 residues: Mu-type opioid receptor (398 aa).

Topologically, residues 1-66 are extracellular; the sequence is MDSSTGPGNT…CPQTGSPSMV (66 aa). N-linked (GlcNAc...) asparagine glycosylation is found at Asn-9, Asn-31, Asn-38, Asn-46, and Asn-53. The helical transmembrane segment at 67–91 threads the bilayer; that stretch reads TAITIMALYSIVCVVGLFGNFLVMY. The Cytoplasmic segment spans residues 92–104; that stretch reads VIVRYTKMKTATN. Residues 105–129 traverse the membrane as a helical segment; that stretch reads IYIFNLALADALATSTLPFQSVNYL. Residues 130-140 are Extracellular-facing; it reads MGTWPFGTILC. A disulfide bridge links Cys-140 with Cys-217. The chain crosses the membrane as a helical span at residues 141 to 163; the sequence is KIVISIDYYNMFTSIFTLCTMSV. Over 164–183 the chain is Cytoplasmic; the sequence is DRYIAVCHPVKALDFRTPRN. Tyr-166 carries the phosphotyrosine modification. The chain crosses the membrane as a helical span at residues 184 to 205; the sequence is AKIVNVCNWILSSAIGLPVMFM. Over 206–228 the chain is Extracellular; sequence ATTKYRQGSIDCTLTFSHPTWYW. A helical membrane pass occupies residues 229 to 253; that stretch reads ENLLKICVFIFAFIMPVLIITVCYG. At 254 to 277 the chain is on the cytoplasmic side; the sequence is LMILRLKSVRMLSGSKEKDRNLRR. Residues 278–304 traverse the membrane as a helical segment; that stretch reads ITRMVLVVVAVFIVCWTPIHIYVIIKA. Over 305 to 312 the chain is Extracellular; it reads LITIPETT. Residues 313–336 form a helical membrane-spanning segment; the sequence is FQTVSWHFCIALGYTNSCLNPVLY. Positions 332-336 match the NPxxY; plays a role in stabilizing the activated conformation of the receptor motif; it reads NPVLY. Residues 337–398 are Cytoplasmic-facing; that stretch reads AFLDENFKRC…NLEAETAPLP (62 aa). The S-palmitoyl cysteine moiety is linked to residue Cys-351. The segment at 361-385 is disordered; sequence QNSTRVRQNTREHPSTANTVDRTNH. Ser-363 is subject to Phosphoserine. Thr-370 is modified (phosphothreonine). At Ser-375 the chain carries Phosphoserine. The residue at position 394 (Thr-394) is a Phosphothreonine.

This sequence belongs to the G-protein coupled receptor 1 family. In terms of assembly, forms homooligomers and heterooligomers with other GPCRs, such as OPRD1, OPRK1, OPRL1, NPFFR2, ADRA2A, SSTR2, CNR1 and CCR5 (probably in dimeric forms). Interacts with heterotrimeric G proteins; interaction with a heterotrimeric complex containing GNAI1, GNB1 and GNG2 stabilizes the active conformation of the receptor and increases its affinity for endomorphin-2, the synthetic opioid peptide DAMGO and for morphinan agonists. Interacts with PPL; the interaction disrupts agonist-mediated G-protein activation. Interacts (via C-terminus) with DNAJB4 (via C-terminus). Interacts with calmodulin; the interaction inhibits the constitutive activity of OPRM1; it abolishes basal and attenuates agonist-stimulated G-protein coupling. Interacts with FLNA, PLD2, RANBP9 and WLS and GPM6A. Interacts with RTP4. Interacts with SYP and GNAS. Interacts with RGS9, RGS17, RGS20, RGS4, PPP1R9B and HINT1. Post-translationally, phosphorylated. Differentially phosphorylated in basal and agonist-induced conditions. Agonist-mediated phosphorylation modulates receptor internalization. Phosphorylated by GRK2 in a agonist-dependent manner. Phosphorylation at Tyr-166 requires receptor activation, is dependent on non-receptor protein tyrosine kinase Src and results in a decrease in agonist efficacy by reducing G-protein coupling efficiency. Phosphorylated on tyrosine residues; the phosphorylation is involved in agonist-induced G-protein-independent receptor down-regulation. Phosphorylation at Ser-375 is involved in G-protein-dependent but not beta-arrestin-dependent activation of the ERK pathway. Ubiquitinated. A basal ubiquitination seems not to be related to degradation. Ubiquitination is increased upon formation of OPRM1:OPRD1 oligomers leading to proteasomal degradation; the ubiquitination is diminished by RTP4. As to expression, brain. Is expressed in the cerebral cortex, caudate putamen, nucleus accumbens, septal nuclei, thalamus, hippocampus, and habenula. Not detected in cerebellum.

The protein localises to the cell membrane. It is found in the cell projection. The protein resides in the axon. Its subcellular location is the perikaryon. It localises to the dendrite. The protein localises to the endosome. Receptor for endogenous opioids such as beta-endorphin and endomorphin. Receptor for natural and synthetic opioids including morphine, heroin, DAMGO, fentanyl, etorphine, buprenorphin and methadone. Also activated by enkephalin peptides, such as Met-enkephalin or Met-enkephalin-Arg-Phe, with higher affinity for Met-enkephalin-Arg-Phe. Agonist binding to the receptor induces coupling to an inactive GDP-bound heterotrimeric G-protein complex and subsequent exchange of GDP for GTP in the G-protein alpha subunit leading to dissociation of the G-protein complex with the free GTP-bound G-protein alpha and the G-protein beta-gamma dimer activating downstream cellular effectors. The agonist- and cell type-specific activity is predominantly coupled to pertussis toxin-sensitive G(i) and G(o) G alpha proteins, GNAI1, GNAI2, GNAI3 and GNAO1 isoforms Alpha-1 and Alpha-2, and to a lesser extent to pertussis toxin-insensitive G alpha proteins GNAZ and GNA15. They mediate an array of downstream cellular responses, including inhibition of adenylate cyclase activity and both N-type and L-type calcium channels, activation of inward rectifying potassium channels, mitogen-activated protein kinase (MAPK), phospholipase C (PLC), phosphoinositide/protein kinase (PKC), phosphoinositide 3-kinase (PI3K) and regulation of NF-kappa-B. Also couples to adenylate cyclase stimulatory G alpha proteins. The selective temporal coupling to G-proteins and subsequent signaling can be regulated by RGSZ proteins, such as RGS9, RGS17 and RGS4. Phosphorylation by members of the GPRK subfamily of Ser/Thr protein kinases and association with beta-arrestins is involved in short-term receptor desensitization. Beta-arrestins associate with the GPRK-phosphorylated receptor and uncouple it from the G-protein thus terminating signal transduction. The phosphorylated receptor is internalized through endocytosis via clathrin-coated pits which involves beta-arrestins. The activation of the ERK pathway occurs either in a G-protein-dependent or a beta-arrestin-dependent manner and is regulated by agonist-specific receptor phosphorylation. Acts as a class A G-protein coupled receptor (GPCR) which dissociates from beta-arrestin at or near the plasma membrane and undergoes rapid recycling. Receptor down-regulation pathways are varying with the agonist and occur dependent or independent of G-protein coupling. Endogenous ligands induce rapid desensitization, endocytosis and recycling. Heterooligomerization with other GPCRs can modulate agonist binding, signaling and trafficking properties. The polypeptide is Mu-type opioid receptor (Oprm1) (Rattus norvegicus (Rat)).